An 80-amino-acid polypeptide reads, in one-letter code: Cell division protein ZapB (80 aa).

Residues Phe-3–Glu-80 are a coiled coil.

Belongs to the ZapB family. Homodimer. The ends of the coiled-coil dimer bind to each other, forming polymers. Interacts with FtsZ.

Its subcellular location is the cytoplasm. Its function is as follows. Non-essential, abundant cell division factor that is required for proper Z-ring formation. It is recruited early to the divisome by direct interaction with FtsZ, stimulating Z-ring assembly and thereby promoting cell division earlier in the cell cycle. Its recruitment to the Z-ring requires functional FtsA or ZipA. The sequence is that of Cell division protein ZapB from Vibrio atlanticus (strain LGP32) (Vibrio splendidus (strain Mel32)).